We begin with the raw amino-acid sequence, 440 residues long: Adenylyltransferase and sulfurtransferase UBA4 (440 aa).

Position 1 is an N-acetylmethionine (methionine 1). ATP contacts are provided by residues glycine 77, aspartate 98, 105-109, lysine 122, and 166-167; these read SNLHR and DS. Positions 208 and 211 each coordinate Zn(2+). Cysteine 225 (glycyl thioester intermediate; for adenylyltransferase activity) is an active-site residue. Cysteine 286 and cysteine 289 together coordinate Zn(2+). A Phosphoserine modification is found at serine 326. In terms of domain architecture, Rhodanese spans 339-438; it reads FLAKHIFLDV…YIDDIDQTIP (100 aa). The active-site Cysteine persulfide intermediate; for sulfurtransferase activity is the cysteine 397.

The protein in the N-terminal section; belongs to the HesA/MoeB/ThiF family. UBA4 subfamily. Zn(2+) serves as cofactor.

It is found in the cytoplasm. Its subcellular location is the cytosol. It participates in tRNA modification; 5-methoxycarbonylmethyl-2-thiouridine-tRNA biosynthesis. In terms of biological role, plays a central role in 2-thiolation of mcm(5)S(2)U at tRNA wobble positions of cytosolic tRNA(Lys), tRNA(Glu) and tRNA(Gln). Acts by mediating the C-terminal thiocarboxylation of sulfur carrier URM1. Its N-terminus first activates URM1 as acyl-adenylate (-COAMP), then the persulfide sulfur on the catalytic cysteine is transferred to URM1 to form thiocarboxylation (-COSH) of its C-terminus. The reaction probably involves hydrogen sulfide that is generated from the persulfide intermediate and that acts as a nucleophile towards URM1. Subsequently, a transient disulfide bond is formed. Does not use thiosulfate as sulfur donor; NFS1 probably acting as a sulfur donor for thiocarboxylation reactions. Prior mcm(5) tRNA modification by the elongator complex is required for 2-thiolation. May also be involved in protein urmylation. In Saccharomyces cerevisiae (strain RM11-1a) (Baker's yeast), this protein is Adenylyltransferase and sulfurtransferase UBA4.